Consider the following 517-residue polypeptide: Nicotine N-demethylase CYP82E4 (517 aa).

A helical membrane pass occupies residues 2-22 (LSPIEAIVGLVTFTFLFYFLW). Lys254 is covalently cross-linked (Glycyl lysine isopeptide (Lys-Gly) (interchain with G-Cter in ubiquitin)). A heme-binding site is contributed by Cys457.

It belongs to the cytochrome P450 family. CYP82E2 subfamily. The cofactor is heme. As to expression, expressed in leaves.

It is found in the membrane. The catalysed reaction is (S)-nicotine + reduced [NADPH--hemoprotein reductase] + O2 = (S)-nornicotine + formaldehyde + oxidized [NADPH--hemoprotein reductase] + H2O + H(+). Its pathway is alkaloid biosynthesis; nicotine biosynthesis. In terms of biological role, involved in the biosynthesis of pyridine alkaloid natural products, leading mainly to the production of anabasine, anatabine, nicotine and nornicotine, effective deterrents against herbivores with antiparasitic and pesticide properties (neurotoxins); nornicotine serves as the precursor in the synthesis of the carcinogen compound N'-nitrosonornicotine (NNN). Catalyzes the demethylation of nicotine to form nornicotine. This chain is Nicotine N-demethylase CYP82E4, found in Nicotiana tomentosiformis (Tobacco).